We begin with the raw amino-acid sequence, 420 residues long: MKHPFQIIVADTTGRYLFTTVKNVLLVIDLTSGKLVGQWKDELDNSDFLKKKYEEKFDKENDSKRQKSESGQAKVSKIPTPGPGAPPIYNYIRALRLSSDEKYLFATTDSDKAVVIFTIDHSKDNCLELKKRQPFSKRPCALSVDEDRLVVADKFGDVYSIAIEDDQVVNEKELTPILGHVSMLSDVAIVSNDKKKFIITGDRDEHIRISNYPKSFVIKNFLFGHHEFVSCLHVPNFDQSLLISGGGDDYLCLWRWYEGQLVAKIELRELIAPFLTDSHLPPERFLTETSPKEISVARILTFTNKKTGLNILVVLCEQTKAVLLFEIDAKLSVRHLQTISYEDNVLDMCYIEATNTLISAHDSDKNQLFQQQKFDEETNNFTPTTETMDAVAELNPIDVNSRNDFLPLYYINTLRKRSEH.

The segment covering 59–68 (KENDSKRQKS) has biased composition (basic and acidic residues). Residues 59–82 (KENDSKRQKSESGQAKVSKIPTPG) form a disordered region. WD repeat units follow at residues 87 to 127 (PIYN…DNCL), 179 to 220 (GHVS…VIKN), 224 to 266 (GHHE…AKIE), and 340 to 379 (SYED…EETN).

This sequence belongs to the WD repeat TRM82 family. In terms of assembly, forms a heterodimer with the catalytic subunit TRM8.

It localises to the nucleus. The protein operates within tRNA modification; N(7)-methylguanine-tRNA biosynthesis. Functionally, required for the formation of N(7)-methylguanine at position 46 (m7G46) in tRNA. In the complex, it is required to stabilize and induce conformational changes of the catalytic subunit. In Meyerozyma guilliermondii (strain ATCC 6260 / CBS 566 / DSM 6381 / JCM 1539 / NBRC 10279 / NRRL Y-324) (Yeast), this protein is tRNA (guanine-N(7)-)-methyltransferase non-catalytic subunit TRM82.